A 397-amino-acid chain; its full sequence is Ethanolaminephosphotransferase 1 (397 aa).

The residue at position 2 (Ala-2) is an N-acetylalanine. 10 helical membrane-spanning segments follow: residues 47-69 (WLAPNLITFSGFLLVVFNFLLMA), 84-103 (HVPDWVWIVVGILNFVAYTL), 123-145 (LFDHGLDNWSYVYFVVTVYSIFG), 150-172 (GVSVFVLYLLLWVVLFSFILSHW), 179-201 (ILFLPWGYDISQVTISFVYIVTA), 221-243 (LFTAMIIGCALCVTLPMSLLNFF), 256-278 (VYEAMVPLFSPCLLFILSTAWIL), 291-310 (VFYFMVGTAFANSTCQLIVC), 317-339 (CPTLNWLLVPLFLVVLVVNLGVA), and 344-366 (SILLYTLTTAFTLAHIHYGVRVV). Position 387 (Sec-387) is a non-standard amino acid, selenocysteine.

This sequence belongs to the CDP-alcohol phosphatidyltransferase class-I family. The cofactor is Mg(2+). It depends on Mn(2+) as a cofactor.

It localises to the endoplasmic reticulum membrane. The enzyme catalyses CDP-ethanolamine + a 1,2-diacyl-sn-glycerol = a 1,2-diacyl-sn-glycero-3-phosphoethanolamine + CMP + H(+). It carries out the reaction 1-O-alkyl-2-acyl-sn-glycerol + CDP-ethanolamine = a 1-O-alkyl-2-acyl-sn-glycero-3-phosphoethanolamine + CMP + H(+). The protein operates within phospholipid metabolism; phosphatidylethanolamine biosynthesis; phosphatidylethanolamine from ethanolamine: step 3/3. Ethanolaminephosphotransferase that catalyzes the transfer of phosphoethanolamine (PE) from CDP-ethanolamine to lipid acceptors, the final step in the synthesis of PE via the 'Kennedy' pathway. PE is the second most abundant phospholipid of membranes in mammals and is involved in various membrane-related cellular processes. The enzyme is critical for the synthesis of several PE species and also catalyzes the synthesis of plasmanyl-PE, a lipid required for proper myelination and neurodevelopment, from 1-alkyl-2-acylglycerol. In Pongo abelii (Sumatran orangutan), this protein is Ethanolaminephosphotransferase 1.